Reading from the N-terminus, the 404-residue chain is Argininosuccinate synthase (404 aa).

An ATP-binding site is contributed by 9–17; sequence AYSGGLDTS. Tyr86 serves as a coordination point for L-citrulline. Gly116 is a binding site for ATP. 3 residues coordinate L-aspartate: Thr118, Asn122, and Asp123. Residue Asn122 participates in L-citrulline binding. Positions 126, 174, 183, 259, and 271 each coordinate L-citrulline.

It belongs to the argininosuccinate synthase family. Type 1 subfamily. Homotetramer.

The protein localises to the cytoplasm. The enzyme catalyses L-citrulline + L-aspartate + ATP = 2-(N(omega)-L-arginino)succinate + AMP + diphosphate + H(+). It functions in the pathway amino-acid biosynthesis; L-arginine biosynthesis; L-arginine from L-ornithine and carbamoyl phosphate: step 2/3. The sequence is that of Argininosuccinate synthase from Listeria innocua serovar 6a (strain ATCC BAA-680 / CLIP 11262).